Consider the following 609-residue polypeptide: MGSSERSEAFGTPRESDMSSGDEAELEELRREAAMLREQLEHAVGSHGGARSARDVHQLEARIDSLAARNSKLMETLKEARQQLLALREEVDRLGQPPSGYGVLLATHEDDTVDVFTSGRKMRLTCSPNIDVSLLRKGQTVRLNEALTVVEAGTFESVGEISTLRELLADGHRALVVGHADEERIVWLAEPLVADNLPDGHPDALNDDTRPRKLRPGDSLLVDTKAGYAFERIPKAEVEDLVLEEVPDVSYEDIGGLTRQIEQIRDAVELPFLHKELYREYALRPPKGVLLYGPPGCGKTLIAKAVANSLAKKMAEVRGDDAREAKSYFLNIKGPELLNKFVGETERHIRLIFQRAREKASEGTPVIVFFDEMDSIFRTRGTGVSSDVETTVVPQLLSEIDGVEGLENVIVIGASNREDMIDPAILRPGRLDVKIKIERPDAEAAQDIFSKYLTEELPLHADDLAEFGGDRTACIKAMIEKVVERMYAEIDDNRFLEVTYANGDKEVMYFKDFNSGAMIQNVVDRAKKNAIKSVLETGQPGLRIQHLLDSIVDEFAENEDLPNTTNPDDWARISGKKGERIVYIRTLVTGKSSSASRAIDTESNLGQYL.

The tract at residues 1-27 (MGSSERSEAFGTPRESDMSSGDEAELE) is disordered. Residues 17–96 (DMSSGDEAEL…LREEVDRLGQ (80 aa)) adopt a coiled-coil conformation. Position 296 to 301 (296 to 301 (GCGKTL)) interacts with ATP. The tract at residues 608–609 (YL) is docks into pockets in the proteasome alpha-ring.

This sequence belongs to the AAA ATPase family. In terms of assembly, homohexamer. Assembles into a hexameric ring structure that caps the 20S proteasome core. Strongly interacts with the prokaryotic ubiquitin-like protein Pup through a hydrophobic interface; the interacting region of ARC lies in its N-terminal coiled-coil domain. There is one Pup binding site per ARC hexamer ring. Upon ATP-binding, the C-terminus of ARC interacts with the alpha-rings of the proteasome core, possibly by binding to the intersubunit pockets.

It participates in protein degradation; proteasomal Pup-dependent pathway. In terms of biological role, ATPase which is responsible for recognizing, binding, unfolding and translocation of pupylated proteins into the bacterial 20S proteasome core particle. May be essential for opening the gate of the 20S proteasome via an interaction with its C-terminus, thereby allowing substrate entry and access to the site of proteolysis. Thus, the C-termini of the proteasomal ATPase may function like a 'key in a lock' to induce gate opening and therefore regulate proteolysis. This is Proteasome-associated ATPase from Mycobacterium avium (strain 104).